The following is a 347-amino-acid chain: Holliday junction branch migration complex subunit RuvB (347 aa).

The segment covering 1 to 10 has biased composition (polar residues); it reads MAIVSSSSGR. Residues 1–29 are disordered; that stretch reads MAIVSSSSGRKSPCRETALVDPQPAPEEQ. The interval 13-198 is large ATPase domain (RuvB-L); that stretch reads PCRETALVDP…FGLIQRLEFY (186 aa). Positions 37, 38, 79, 82, 83, 84, 188, 198, and 235 each coordinate ATP. T83 lines the Mg(2+) pocket. The interval 199–270 is small ATPAse domain (RuvB-S); it reads GQTDLEAIVA…MVAEALSLHR (72 aa). A head domain (RuvB-H) region spans residues 273-347; sequence HRGLDASDRR…AARSHIAEAA (75 aa). 2 residues coordinate DNA: R328 and R333.

This sequence belongs to the RuvB family. Homohexamer. Forms an RuvA(8)-RuvB(12)-Holliday junction (HJ) complex. HJ DNA is sandwiched between 2 RuvA tetramers; dsDNA enters through RuvA and exits via RuvB. An RuvB hexamer assembles on each DNA strand where it exits the tetramer. Each RuvB hexamer is contacted by two RuvA subunits (via domain III) on 2 adjacent RuvB subunits; this complex drives branch migration. In the full resolvosome a probable DNA-RuvA(4)-RuvB(12)-RuvC(2) complex forms which resolves the HJ.

It is found in the cytoplasm. The catalysed reaction is ATP + H2O = ADP + phosphate + H(+). Its function is as follows. The RuvA-RuvB-RuvC complex processes Holliday junction (HJ) DNA during genetic recombination and DNA repair, while the RuvA-RuvB complex plays an important role in the rescue of blocked DNA replication forks via replication fork reversal (RFR). RuvA specifically binds to HJ cruciform DNA, conferring on it an open structure. The RuvB hexamer acts as an ATP-dependent pump, pulling dsDNA into and through the RuvAB complex. RuvB forms 2 homohexamers on either side of HJ DNA bound by 1 or 2 RuvA tetramers; 4 subunits per hexamer contact DNA at a time. Coordinated motions by a converter formed by DNA-disengaged RuvB subunits stimulates ATP hydrolysis and nucleotide exchange. Immobilization of the converter enables RuvB to convert the ATP-contained energy into a lever motion, pulling 2 nucleotides of DNA out of the RuvA tetramer per ATP hydrolyzed, thus driving DNA branch migration. The RuvB motors rotate together with the DNA substrate, which together with the progressing nucleotide cycle form the mechanistic basis for DNA recombination by continuous HJ branch migration. Branch migration allows RuvC to scan DNA until it finds its consensus sequence, where it cleaves and resolves cruciform DNA. The protein is Holliday junction branch migration complex subunit RuvB of Synechococcus sp. (strain CC9902).